The sequence spans 364 residues: Probable dual-specificity RNA methyltransferase RlmN (364 aa).

Glu107 functions as the Proton acceptor in the catalytic mechanism. Residues 113–346 enclose the Radical SAM core domain; sequence HNYGNSVCVT…VTIRREHGHD (234 aa). A disulfide bridge connects residues Cys120 and Cys351. Residues Cys127, Cys131, and Cys134 each coordinate [4Fe-4S] cluster. S-adenosyl-L-methionine contacts are provided by residues 177 to 178, Ser209, 232 to 234, and Asn308; these read GE and SLH. The active-site S-methylcysteine intermediate is the Cys351.

It belongs to the radical SAM superfamily. RlmN family. The cofactor is [4Fe-4S] cluster.

It localises to the cytoplasm. It catalyses the reaction adenosine(2503) in 23S rRNA + 2 reduced [2Fe-2S]-[ferredoxin] + 2 S-adenosyl-L-methionine = 2-methyladenosine(2503) in 23S rRNA + 5'-deoxyadenosine + L-methionine + 2 oxidized [2Fe-2S]-[ferredoxin] + S-adenosyl-L-homocysteine. The enzyme catalyses adenosine(37) in tRNA + 2 reduced [2Fe-2S]-[ferredoxin] + 2 S-adenosyl-L-methionine = 2-methyladenosine(37) in tRNA + 5'-deoxyadenosine + L-methionine + 2 oxidized [2Fe-2S]-[ferredoxin] + S-adenosyl-L-homocysteine. Functionally, specifically methylates position 2 of adenine 2503 in 23S rRNA and position 2 of adenine 37 in tRNAs. The chain is Probable dual-specificity RNA methyltransferase RlmN from Geobacillus thermodenitrificans (strain NG80-2).